Reading from the N-terminus, the 574-residue chain is MRASNYLFSTLRDAPTDAVVTSHQLMIRAGMIRQVSKGLYTWLPTGLKVFRKIENIVRDEMEKAGSLEVMMPGVQPAELWQETGRWQKYGPELLRLQDRHGREYCLGPTHEEVITELARNELTSYKQLPMNFFQIQTKFRDEVRPRFGVMRSREFCMKDAYSFHVGAESLQETYDIMHKAYCNVFDRIGLNYRPVRADTGSIGGAYSHEFHVLADSGEDDIAFSDSSDFAANIELAEAICLKEKADAPTQDITEVFTPDCKTIAKVAEFLKLDVTSTVKTMLIKAVDENDQPTIAALVLRGDHNINEIKVEKLAGVVIPFEFADEADIIAKTGCAPGSIGPKGLAEKGIRVIADRSAAVMSDFCAGANKDDYHFTGLNWERDCAEFEVADIRNVVEGDPSPDGQGTIVIKRGIEVGHIFQLGQQYAEALKATVLDENGKAQVMHMGCYGIGVSRIVAAAIEQNFDEKGILWPESIAPFDIAIVAMNYDKSEAVRTECDRLYAELKAKGLDVLLDDRKERPGVKFADCELLGIPHRLVVGDKGLEKGTLEYKYRKAGDNEDIAIADAVEFILSKK.

This sequence belongs to the class-II aminoacyl-tRNA synthetase family. ProS type 1 subfamily. In terms of assembly, homodimer.

Its subcellular location is the cytoplasm. It carries out the reaction tRNA(Pro) + L-proline + ATP = L-prolyl-tRNA(Pro) + AMP + diphosphate. Its function is as follows. Catalyzes the attachment of proline to tRNA(Pro) in a two-step reaction: proline is first activated by ATP to form Pro-AMP and then transferred to the acceptor end of tRNA(Pro). As ProRS can inadvertently accommodate and process non-cognate amino acids such as alanine and cysteine, to avoid such errors it has two additional distinct editing activities against alanine. One activity is designated as 'pretransfer' editing and involves the tRNA(Pro)-independent hydrolysis of activated Ala-AMP. The other activity is designated 'posttransfer' editing and involves deacylation of mischarged Ala-tRNA(Pro). The misacylated Cys-tRNA(Pro) is not edited by ProRS. This is Proline--tRNA ligase from Marinomonas sp. (strain MWYL1).